A 234-amino-acid chain; its full sequence is ATP-dependent dethiobiotin synthetase BioD (234 aa).

ATP is bound at residue 12–17; that stretch reads DVGKTF. Position 16 (Thr16) interacts with Mg(2+). Lys37 is a catalytic residue. Substrate is bound at residue Thr41. ATP contacts are provided by residues Asp54 and 115-118; that span reads EGAG. Positions 54 and 115 each coordinate Mg(2+).

This sequence belongs to the dethiobiotin synthetase family. As to quaternary structure, homodimer. Requires Mg(2+) as cofactor.

The protein resides in the cytoplasm. It carries out the reaction (7R,8S)-7,8-diammoniononanoate + CO2 + ATP = (4R,5S)-dethiobiotin + ADP + phosphate + 3 H(+). It functions in the pathway cofactor biosynthesis; biotin biosynthesis; biotin from 7,8-diaminononanoate: step 1/2. Catalyzes a mechanistically unusual reaction, the ATP-dependent insertion of CO2 between the N7 and N8 nitrogen atoms of 7,8-diaminopelargonic acid (DAPA, also called 7,8-diammoniononanoate) to form a ureido ring. This chain is ATP-dependent dethiobiotin synthetase BioD, found in Lysinibacillus sphaericus (Bacillus sphaericus).